We begin with the raw amino-acid sequence, 163 residues long: Probable chemoreceptor glutamine deamidase CheD (163 aa).

It belongs to the CheD family.

It carries out the reaction L-glutaminyl-[protein] + H2O = L-glutamyl-[protein] + NH4(+). Functionally, probably deamidates glutamine residues to glutamate on methyl-accepting chemotaxis receptors (MCPs), playing an important role in chemotaxis. The protein is Probable chemoreceptor glutamine deamidase CheD of Borreliella burgdorferi (strain ATCC 35210 / DSM 4680 / CIP 102532 / B31) (Borrelia burgdorferi).